The sequence spans 63 residues: Conotoxin TxMRCL-D012 (63 aa).

The N-terminal stretch at 1-19 is a signal peptide; it reads MRCLPVFVILLLLIASTPS. The propeptide occupies 20–47; the sequence is DTVPLKTKDDMPQASFHGNARRTLQMLS. Gln50 bears the Pyrrolidone carboxylic acid mark.

It belongs to the conotoxin T superfamily. Contains 2 disulfide bonds that can be either 'C1-C3, C2-C4' or 'C1-C4, C2-C3', since these disulfide connectivities have been observed for conotoxins with cysteine framework V (for examples, see AC P0DQQ7 and AC P81755). In terms of tissue distribution, expressed by the venom duct.

It is found in the secreted. The protein is Conotoxin TxMRCL-D012 of Conus textile (Cloth-of-gold cone).